A 412-amino-acid chain; its full sequence is Protein translocase subunit SecY (412 aa).

Transmembrane regions (helical) follow at residues 17 to 37 (IFLT…PVPG), 58 to 78 (IFSG…VPYI), 117 to 137 (ALGW…PYVF), 143 to 163 (FVVQ…WFSE), 170 to 190 (IGNG…PKLI), 251 to 271 (VMPI…GQVI), 293 to 313 (YLIF…SLII), 350 to 370 (TFLG…IENI), and 372 to 392 (SIST…GVAI).

Belongs to the SecY/SEC61-alpha family. In terms of assembly, component of the plastid Sec protein translocase complex, which is composed of at least SecY and SecE.

The protein localises to the plastid. Its subcellular location is the chloroplast thylakoid membrane. In terms of biological role, the central subunit of the protein translocation channel SecYE. Consists of two halves formed by TMs 1-5 and 6-10. These two domains form a lateral gate at the front which open onto the bilayer between TMs 2 and 7, and are clamped together by SecE at the back. The channel is closed by both a pore ring composed of hydrophobic SecY resides and a short helix (helix 2A) on the extracellular side of the membrane which forms a plug. This is Protein translocase subunit SecY from Pyrenomonas salina.